Consider the following 427-residue polypeptide: UDP-N-acetyl-D-mannosamine dehydrogenase (427 aa).

NAD(+) is bound by residues Y20, I21, D40, R45, T92, and T130. UDP-N-acetyl-alpha-D-mannosaminouronate-binding residues include R157, V158, K209, N213, R216, H247, R249, and G260. K209 acts as the Proton donor/acceptor in catalysis. C263 functions as the Nucleophile in the catalytic mechanism. Residues Y317 and K318 each coordinate UDP-N-acetyl-alpha-D-mannosaminouronate. Residue R325 participates in NAD(+) binding. K403 is a binding site for UDP-N-acetyl-alpha-D-mannosaminouronate.

It belongs to the UDP-glucose/GDP-mannose dehydrogenase family. Homotetramer; probably dimer of dimers.

It catalyses the reaction UDP-N-acetyl-alpha-D-mannosamine + 2 NAD(+) + H2O = UDP-N-acetyl-alpha-D-mannosaminouronate + 2 NADH + 3 H(+). In terms of biological role, catalyzes the four-electron oxidation of UDP-N-acetyl-D-mannosamine (UDP-ManNAc), reducing NAD(+) and releasing UDP-N-acetylmannosaminuronic acid (UDP-ManNAcA). In Methanocaldococcus jannaschii (strain ATCC 43067 / DSM 2661 / JAL-1 / JCM 10045 / NBRC 100440) (Methanococcus jannaschii), this protein is UDP-N-acetyl-D-mannosamine dehydrogenase (wecC).